The following is a 21-amino-acid chain: Bradykinin-potentiating peptide K12 (21 aa).

The disordered stretch occupies residues 1–21; that stretch reads LRDYANRVINGGPVEAAGPPA.

Expressed by the venom gland.

It localises to the secreted. Inhibits angiotensin-converting enzyme (ACE), but does not serve as substrate for the enzyme. Potentiate bradykinin (BK) on the isolated guinea pig ileum as well as the isolated rat uterus for contraction. Also potentiates in vivo the depressor effect of BK on arterial blood pressure in the normotensive anesthetized rat. Intracerebroventricular injection into mice does not show toxic activity. The protein is Bradykinin-potentiating peptide K12 of Buthus occitanus (Common European scorpion).